Reading from the N-terminus, the 632-residue chain is MHLSEITHPNQLHGLSIQELKQIARQIRDKHLETVAATGGHLGPGLGVVELTLGLYQTLDLDRDRVIWDVGHQAYPHKLLTGRYDRFHTLRQKDGVAGYLNRKESEFDHFGAGHASTSISAALGMALARDQRGETHKVVAIIGDGALTGGMSLEAINHAGHLPHTNLMVVLNDNEMSISPNVGALSRYLNKMRLNPQVQFITENLEEQIKHFVGDSITPELGRLKGGMKRLAVPKVGAVFEELGFTYVGPVDGHNLEELIATFNAAHKIPGPVLVHVATVKGKGYAIAEKDQVGYHAQNPFNLATGKAMPSSKPKPPSYSKVFGDTLTKLAEADSRIIGITAAMATGTGLDILQKHLPDQYIDVGIAEQHAVTMAAGLACEGMRPVVTIYSTFLQRAYDQIVHDVCIQSLPVLFCMDRAGIVGADGPTHQGMYDIAYLRCLPNMVLMAPKDEAELQQMLVTGINYMDGPIGLRYPRGNGYGVALMEEGWEPLPIGKAEVLRQGDDLLMLAYGSMVYPTLQAAEILREHGIAATVVNARFAKPLDTELILPLAEKLGRVVTVEEGCLIGGFGSAVLEALQDQEILVPVTRIGIPDILVEHATPDQSKAQLGLTSAQIAERVLAKTQQPAPSRV.

Thiamine diphosphate contacts are provided by residues histidine 72 and 113–115; that span reads GHA. Residue aspartate 144 participates in Mg(2+) binding. Residues 145 to 146, asparagine 174, tyrosine 285, and glutamate 368 each bind thiamine diphosphate; that span reads GA. Mg(2+) is bound at residue asparagine 174.

It belongs to the transketolase family. DXPS subfamily. In terms of assembly, homodimer. The cofactor is Mg(2+). Requires thiamine diphosphate as cofactor.

It catalyses the reaction D-glyceraldehyde 3-phosphate + pyruvate + H(+) = 1-deoxy-D-xylulose 5-phosphate + CO2. Its pathway is metabolic intermediate biosynthesis; 1-deoxy-D-xylulose 5-phosphate biosynthesis; 1-deoxy-D-xylulose 5-phosphate from D-glyceraldehyde 3-phosphate and pyruvate: step 1/1. In terms of biological role, catalyzes the acyloin condensation reaction between C atoms 2 and 3 of pyruvate and glyceraldehyde 3-phosphate to yield 1-deoxy-D-xylulose-5-phosphate (DXP). The protein is 1-deoxy-D-xylulose-5-phosphate synthase of Cyanothece sp. (strain PCC 7425 / ATCC 29141).